The primary structure comprises 151 residues: Deoxyuridine 5'-triphosphate nucleotidohydrolase (151 aa).

Substrate is bound by residues 70-72 (RSG), N83, 87-89 (LID), and M97.

This sequence belongs to the dUTPase family. In terms of assembly, homotrimer. Mg(2+) serves as cofactor.

The catalysed reaction is dUTP + H2O = dUMP + diphosphate + H(+). It participates in pyrimidine metabolism; dUMP biosynthesis; dUMP from dCTP (dUTP route): step 2/2. Its function is as follows. This enzyme is involved in nucleotide metabolism: it produces dUMP, the immediate precursor of thymidine nucleotides and it decreases the intracellular concentration of dUTP so that uracil cannot be incorporated into DNA. In Escherichia fergusonii (strain ATCC 35469 / DSM 13698 / CCUG 18766 / IAM 14443 / JCM 21226 / LMG 7866 / NBRC 102419 / NCTC 12128 / CDC 0568-73), this protein is Deoxyuridine 5'-triphosphate nucleotidohydrolase.